The primary structure comprises 69 residues: DNA-directed RNA polymerase subunit omega (69 aa).

The protein belongs to the RNA polymerase subunit omega family. As to quaternary structure, the RNAP catalytic core consists of 2 alpha, 1 beta, 1 beta' and 1 omega subunit. When a sigma factor is associated with the core the holoenzyme is formed, which can initiate transcription.

The catalysed reaction is RNA(n) + a ribonucleoside 5'-triphosphate = RNA(n+1) + diphosphate. Its function is as follows. Promotes RNA polymerase assembly. Latches the N- and C-terminal regions of the beta' subunit thereby facilitating its interaction with the beta and alpha subunits. The chain is DNA-directed RNA polymerase subunit omega from Geobacter metallireducens (strain ATCC 53774 / DSM 7210 / GS-15).